We begin with the raw amino-acid sequence, 96 residues long: Small ribosomal subunit protein bS6c (96 aa).

The protein belongs to the bacterial ribosomal protein bS6 family.

It is found in the plastid. The protein localises to the chloroplast. In terms of biological role, binds together with bS18 to 16S ribosomal RNA. This Guillardia theta (Cryptophyte) protein is Small ribosomal subunit protein bS6c (rps6).